Reading from the N-terminus, the 490-residue chain is Pre-glycoprotein polyprotein GP complex (490 aa).

A lipid anchor (N-myristoyl glycine; by host) is attached at G2. The Extracellular segment spans residues 2-17 (GQIVTFFQEVPHVIEE). Residues 18-33 (VMNIVLIALSILAILK) traverse the membrane as a helical segment. The Cytoplasmic portion of the chain corresponds to 34–58 (GLYNVATCGLIGLVTFLLLSGRSCS). C57 lines the Zn(2+) pocket. Over 59 to 431 (LIYKGTYELQ…QGKTPLGLVD (373 aa)) the chain is Extracellular. N-linked (GlcNAc...) asparagine; by host glycosylation is found at N78, N88, N98, N108, N118, and N166. Disulfide bonds link C85/C230, C117/C154, C179/C211, C278/C291, C300/C309, and C363/C384. The N-linked (GlcNAc...) asparagine; by host glycan is linked to N223. N-linked (GlcNAc...) asparagine; by host glycans are attached at residues N364, N372, N389, and N394. A helical membrane pass occupies residues 432 to 452 (LFVFSTSFYLISIFLHLVKIP). Residues 453–490 (THRHIVGKPCPKPHRLNHMGICSCGLYKQPGVPVRWKR) lie on the Cytoplasmic side of the membrane. Zn(2+) is bound by residues H454, H456, C462, H466, C474, and C476.

It belongs to the arenaviridae GPC protein family. As to quaternary structure, interacts with glycoprotein G2. Part of the GP complex (GP-C) together with glycoprotein G1 and glycoprotein G2. The GP-complex interacts with protein Z, which interacts with ribonucleocapsid; these interactions may induce virion budding. Homotrimer; disulfide-linked. In pre-fusion state, G1 homotrimers bind G2 homotrimers via ionic interactions. Part of the GP complex (GP-C) together with glycoprotein G2 and the stable signal peptide. Interacts with the primary host receptor DAG1 on the cell surface; this interaction occurs at pH 8.0 but not at pH 6.0 and below. Upon virus internalization and at endosomal pH, interacts with the host lysosomal protein LAMP1; this interaction mediates G1 dissociation from GP-C and membrane fusion. The GP-complex interacts with protein Z, which interacts with ribonucleocapsid; these interactions may induce virion budding. In terms of assembly, homotrimer. Interacts with the stable signal peptide. In pre-fusion state, G2 homotrimers bind G1 homotrimers via ionic interactions. Part of the GP complex (GP-C) together with glycoprotein G1 and the stable signal peptide. Acidification in the endosome triggers rearrangements, which ultimately leads to a 6 helix bundle formed by the two heptad repeat domains (HR1 and HR2) in post-fusion state. The GP-complex interacts with protein Z, which interacts with ribonucleocapsid; these interactions may induce virion budding. In terms of processing, specific enzymatic cleavages in vivo yield mature proteins. GP-C polyprotein is cleaved in the endoplasmic reticulum by the host protease MBTPS1. Only cleaved glycoprotein is incorporated into virions. Post-translationally, the SSP remains stably associated with the GP complex following cleavage by signal peptidase and plays crucial roles in the trafficking of GP through the secretory pathway. Myristoylation is necessary for GP2-mediated fusion activity.

It localises to the virion membrane. Its subcellular location is the host endoplasmic reticulum membrane. The protein resides in the host Golgi apparatus membrane. The protein localises to the host cell membrane. Functionally, functions as a cleaved signal peptide that is retained as the third component of the GP complex (GP-C). Helps to stabilize the spike complex in its native conformation. The SSP is required for efficient glycoprotein expression, post-translational maturation cleavage of G1 and G2, glycoprotein transport to the cell surface plasma membrane, formation of infectious virus particles, and acid pH-dependent glycoprotein-mediated cell fusion. Forms the virion spikes together with glycoprotein G2. The glycoprotein spike trimers are connected to the underlying matrix. Interacts with the host receptor. Mediates virus attachment to the host primary receptor alpha-dystroglycan DAG1 (alpha-DG) at the cell surface. This attachment induces virion internalization apparently through macropinocytosis. Following endocytosis, there is a pH-dependent switch from binding DAG1 to the host lysosomal receptor LAMP1. This latter binding triggers the dissociation of GP1, exposing the fusion subunit, GP2, such that fusion can occur. Down-modulates host DAG1. Its function is as follows. Forms the virion spikes together with glycoprotein G1. The glycoprotein spike trimers are connected to the underlying matrix. Class I viral fusion protein that directs fusion of viral and host endosomal membranes, leading to delivery of the nucleocapsid into the cytoplasm. Membrane fusion is mediated by irreversible conformational changes induced by acidification. The protein is Pre-glycoprotein polyprotein GP complex of Lassa virus (strain GA391) (LASV).